The sequence spans 193 residues: MAANLIEDNCINLVKMKFVNNTLYFKAESDEGLESDYFGKLEPKLSIIRNLNDQVLFVNEGNQPVFEDMPDSDCTDNAPHTIFIIYMYKDSLTRGLAVTISVKYKTMSTLSCKNKTISFQKMSPPDSINDEGNDIIFFQRSVPGHDDKIQFESSLYKGHFLACKKENDLFKLILKDKDENGDKSIMFTVQNKS.

A propeptide spanning residues 1–36 (MAANLIEDNCINLVKMKFVNNTLYFKAESDEGLESD) is cleaved from the precursor.

The protein belongs to the IL-1 family. In terms of assembly, forms a ternary complex with ligand-binding receptor subunit IL18R1 and signaling receptor subunit IL18RAP at the plasma membrane. Mature IL18 first binds to IL18R1 forming a low affinity binary complex, which then interacts with IL18RAP to form a high affinity ternary complex that signals inside the cell. Interacts with cargo receptor TMED10; the interaction mediates the translocation from the cytoplasm into the ERGIC (endoplasmic reticulum-Golgi intermediate compartment) and thereby secretion. In terms of processing, the pro-IL-18 precursor is processed by CASP1, CASP4 or CASP5 to yield its mature, active form. The pro-IL-18 precursor features autoinhibitory interactions between the propeptide and the post-cleavage-site region, preventing recognition by the IL18R1 receptor. Processing by CASP1, CASP4 or CASP5 induces conformational changes to generate critical receptor-binding sites. The mature form is then secreted and released in the extracellular milieu by passing through the gasdermin-D (GSDMD) pore. In contrast, cleavage by CASP3 inactivates IL18.

The protein localises to the cytoplasm. It is found in the cytosol. It localises to the secreted. Pro-inflammatory cytokine primarily involved in epithelial barrier repair, polarized T-helper 1 (Th1) cell and natural killer (NK) cell immune responses. Upon binding to IL18R1 and IL18RAP, forms a signaling ternary complex which activates NF-kappa-B, triggering synthesis of inflammatory mediators. Synergizes with IL12/interleukin-12 to induce IFNG synthesis from T-helper 1 (Th1) cells and natural killer (NK) cells. Involved in transduction of inflammation downstream of pyroptosis: its mature form is specifically released in the extracellular milieu by passing through the gasdermin-D (GSDMD) pore. This Canis lupus familiaris (Dog) protein is Interleukin-18 (IL18).